We begin with the raw amino-acid sequence, 384 residues long: S-adenosylmethionine synthase (384 aa).

Histidine 15 is a binding site for ATP. Residue aspartate 17 coordinates Mg(2+). Glutamate 43 serves as a coordination point for K(+). Positions 56 and 99 each coordinate L-methionine. Residues 99–109 (QSPDINQGVDK) are flexible loop. ATP is bound by residues 164–166 (DAK), 230–231 (RF), aspartate 239, 245–246 (RK), alanine 262, and lysine 266. Position 239 (aspartate 239) interacts with L-methionine. Residue lysine 270 participates in L-methionine binding.

The protein belongs to the AdoMet synthase family. As to quaternary structure, homotetramer; dimer of dimers. The cofactor is Mg(2+). Requires K(+) as cofactor.

The protein localises to the cytoplasm. It carries out the reaction L-methionine + ATP + H2O = S-adenosyl-L-methionine + phosphate + diphosphate. It functions in the pathway amino-acid biosynthesis; S-adenosyl-L-methionine biosynthesis; S-adenosyl-L-methionine from L-methionine: step 1/1. Functionally, catalyzes the formation of S-adenosylmethionine (AdoMet) from methionine and ATP. The overall synthetic reaction is composed of two sequential steps, AdoMet formation and the subsequent tripolyphosphate hydrolysis which occurs prior to release of AdoMet from the enzyme. This chain is S-adenosylmethionine synthase, found in Vibrio vulnificus (strain YJ016).